Consider the following 453-residue polypeptide: uncharacterized protein (453 aa).

2 disordered regions span residues 140 to 161 (YGES…TRPQ) and 311 to 332 (TTTR…SASS).

This is an uncharacterized protein from Caenorhabditis elegans.